A 506-amino-acid chain; its full sequence is MEKIQRYLQLKRSQQHDFLYPLIFQEYIYVFAHNRALNRSILSENPGYDNKSSLRIVKRLITRMYQQNHFLISSNDSNQNRFWARNKNLYSEIISEGFAFIVEIPFSLQLISCLERKKNKIIKSQNLRSIHSIFPFLEDNFSHLNFVLDILIPHSVHVEILIQTLRYWVKDVSSLHLLRVFLNQYCSLITSKKVSSSLSKRNQRFFFFLYNSHVCEYESIFVFLRNQSFHLRSTSSGVLLERIYFYIKIERLVNVFVKDFRANLWLVEEPCMHYIRYQGKSILASKGTSLFMNKWKFYLVTSWEWHFLVWFHPRRICINQFSRHSLEIFGYLSNVQTDPSVVRSQILENAFLINNAIRKLDTLVPIIPLIAKLAKEKFCNVLGHPSSKPIWADLSDSNIIDRFGRICRNISHYHSGSSKKKSLYRIKYILRLSCARTLARKHKSTVRVFLKRLGSELLEEFLMSEEDVLFLTFQKTSSALRRVYRSRIWYLDMISINDLANYKSKF.

This sequence belongs to the intron maturase 2 family. MatK subfamily.

It is found in the plastid. Its subcellular location is the chloroplast. Its function is as follows. Usually encoded in the trnK tRNA gene intron. Probably assists in splicing its own and other chloroplast group II introns. This is Maturase K from Ocimum basilicum (Sweet basil).